Here is a 261-residue protein sequence, read N- to C-terminus: ATP synthase subunit a (261 aa).

The propeptide at 1 to 14 (MSTLSFNNISTEVL) is removed in mature form. Helical transmembrane passes span 38 to 58 (ITNI…INLL), 96 to 116 (IYFP…LIGM), 126 to 146 (HFVV…ILGF), 153 to 173 (FFSL…LVLI), 191 to 211 (ANIL…YNIM), 214 to 234 (GIIF…FSGL), and 235 to 255 (ELGI…GYIK).

The protein belongs to the ATPase A chain family. In terms of assembly, F-type ATPases have 2 components, CF(1) - the catalytic core - and CF(0) - the membrane proton channel. CF(1) has five subunits: alpha(3), beta(3), gamma(1), delta(1), epsilon(1). CF(0) has three main subunits: a, b and c.

It localises to the mitochondrion inner membrane. Its function is as follows. Mitochondrial membrane ATP synthase (F(1)F(0) ATP synthase or Complex V) produces ATP from ADP in the presence of a proton gradient across the membrane which is generated by electron transport complexes of the respiratory chain. F-type ATPases consist of two structural domains, F(1) - containing the extramembraneous catalytic core and F(0) - containing the membrane proton channel, linked together by a central stalk and a peripheral stalk. During catalysis, ATP synthesis in the catalytic domain of F(1) is coupled via a rotary mechanism of the central stalk subunits to proton translocation. Key component of the proton channel; it may play a direct role in the translocation of protons across the membrane. The protein is ATP synthase subunit a (atp-6) of Neurospora crassa (strain ATCC 24698 / 74-OR23-1A / CBS 708.71 / DSM 1257 / FGSC 987).